A 163-amino-acid polypeptide reads, in one-letter code: Aspartate carbamoyltransferase regulatory chain (163 aa).

Positions 113, 118, 143, and 146 each coordinate Zn(2+).

This sequence belongs to the PyrI family. Contains catalytic and regulatory chains. Requires Zn(2+) as cofactor.

Functionally, involved in allosteric regulation of aspartate carbamoyltransferase. This Caldivirga maquilingensis (strain ATCC 700844 / DSM 13496 / JCM 10307 / IC-167) protein is Aspartate carbamoyltransferase regulatory chain.